Consider the following 478-residue polypeptide: Sorting nexin-4 (478 aa).

The span at 1–10 (MAVIDQHQDD) shows a compositional bias: basic and acidic residues. The interval 1–56 (MAVIDQHQDDFSNVSWNTDEHTAAESSSSVTATEFDDTERNGHNAYESDAPGSDGQ) is disordered. Positions 24 to 33 (AESSSSVTAT) are enriched in low complexity. The 123-residue stretch at 58–180 (VLDCVVSEPL…IFLESPDWNA (123 aa)) folds into the PX domain. A 1,2-diacyl-sn-glycero-3-phospho-(1D-myo-inositol-3-phosphate) is bound by residues Arg-101, Thr-103, Lys-127, and Arg-146. A disordered region spans residues 459-478 (EGVSGTRSTGVEPPGRRLAD).

This sequence belongs to the sorting nexin family. As to quaternary structure, interacts with the mitochondrial prohibitin complex subunits PHB1 and PHB2; the interaction is direct and plays a role in mitophagy.

It localises to the cytoplasm. It is found in the cytosol. Its subcellular location is the preautophagosomal structure membrane. The protein resides in the endosome membrane. The protein localises to the mitochondrion membrane. It localises to the lipid droplet. In terms of biological role, sorting nexin, involved in the separation or division of vacuoles throughout the entire life cycle of the cells. Involved in retrieval of late-Golgi SNAREs from post-Golgi endosomes to the trans-Golgi network, for cytoplasm to vacuole transport (Cvt), and autophagy of large cargos including mitophagy, pexophagy and glycophagy. Required for the switch to necrotrophic growth. This is Sorting nexin-4 from Colletotrichum higginsianum (strain IMI 349063) (Crucifer anthracnose fungus).